Consider the following 143-residue polypeptide: Methylglyoxal synthase (143 aa).

One can recognise an MGS-like domain in the interval Met-1–Ile-143. Residues His-11, Lys-15, Thr-37 to Thr-40, and Ser-57 to Gly-58 contribute to the substrate site. The active-site Proton donor/acceptor is Asp-63. His-90 contacts substrate.

It belongs to the methylglyoxal synthase family.

The enzyme catalyses dihydroxyacetone phosphate = methylglyoxal + phosphate. In terms of biological role, catalyzes the formation of methylglyoxal from dihydroxyacetone phosphate. The sequence is that of Methylglyoxal synthase from Coxiella burnetii (strain Dugway 5J108-111).